A 107-amino-acid polypeptide reads, in one-letter code: N(4)-acetylcytidine amidohydrolase (107 aa).

The ASCH domain occupies 9 to 105 (TFFEFLTPLI…KLFVIEYELI (97 aa)). The active-site Proton acceptor is K23. T26 acts as the Nucleophile in catalysis. E76 (proton donor) is an active-site residue.

The protein belongs to the N(4)-acetylcytidine amidohydrolase family.

The catalysed reaction is N(4)-acetylcytidine + H2O = cytidine + acetate + H(+). It carries out the reaction N(4)-acetyl-2'-deoxycytidine + H2O = 2'-deoxycytidine + acetate + H(+). It catalyses the reaction N(4)-acetylcytosine + H2O = cytosine + acetate + H(+). Its function is as follows. Catalyzes the hydrolysis of N(4)-acetylcytidine (ac4C). In Vibrio parahaemolyticus serotype O3:K6 (strain RIMD 2210633), this protein is N(4)-acetylcytidine amidohydrolase.